The sequence spans 250 residues: Protein KPLCE (250 aa).

As to expression, skin-specific.

The protein is Protein KPLCE of Homo sapiens (Human).